Reading from the N-terminus, the 177-residue chain is LOB domain-containing protein 33 (177 aa).

One can recognise an LOB domain in the interval 6 to 108 (SSCGACKFLR…EEIEFLGSQM (103 aa)).

It belongs to the LOB domain-containing protein family. As to expression, expressed in roots.

This chain is LOB domain-containing protein 33 (LBD33), found in Arabidopsis thaliana (Mouse-ear cress).